The following is a 241-amino-acid chain: DNA repair protein RecO (241 aa).

Belongs to the RecO family.

Functionally, involved in DNA repair and RecF pathway recombination. This is DNA repair protein RecO from Rickettsia canadensis (strain McKiel).